The sequence spans 180 residues: Inner membrane-spanning protein YciB (180 aa).

Helical transmembrane passes span 11 to 31, 52 to 72, 76 to 96, 121 to 141, and 149 to 169; these read ILFF…ALII, IIMG…NKVE, WKVT…QYGF, LAWA…SQYC, and FKSF…GIYV.

Belongs to the YciB family.

It is found in the cell inner membrane. Functionally, plays a role in cell envelope biogenesis, maintenance of cell envelope integrity and membrane homeostasis. The polypeptide is Inner membrane-spanning protein YciB (Mannheimia succiniciproducens (strain KCTC 0769BP / MBEL55E)).